Consider the following 1025-residue polypeptide: Kinesin-like protein KIN-14P (1025 aa).

Disordered regions lie at residues Met1–Gly87 and Tyr263–Glu286. A compositionally biased stretch (low complexity) spans Ser15–Ser28. Basic and acidic residues predominate over residues Val29–Thr41. The segment covering Pro42 to Ser53 has biased composition (low complexity). The span at Lys65–Gln75 shows a compositional bias: polar residues. The stretch at His203–Asn425 forms a coiled coil. A compositionally biased stretch (basic and acidic residues) spans Thr270–Glu286. The region spanning Asn509–Val838 is the Kinesin motor domain. ATP is bound at residue Gly593–Thr600. Residues Lys847–Gln879 are a coiled coil. Disordered regions lie at residues Gln881–Ala926, Ala939–Asp977, and Thr994–Ala1025. 2 stretches are compositionally biased toward polar residues: residues Ser901–Ser913 and Ala939–Ile948. Positions Val950 to Lys962 are enriched in basic and acidic residues. 2 stretches are compositionally biased toward low complexity: residues Ser963–Arg974 and Ser998–Ser1016.

It belongs to the TRAFAC class myosin-kinesin ATPase superfamily. Kinesin family. KIN-14 subfamily.

The protein is Kinesin-like protein KIN-14P of Arabidopsis thaliana (Mouse-ear cress).